The chain runs to 349 residues: N-acetyl-gamma-glutamyl-phosphate reductase (349 aa).

The active site involves C149.

Belongs to the NAGSA dehydrogenase family. Type 1 subfamily.

The protein resides in the cytoplasm. The enzyme catalyses N-acetyl-L-glutamate 5-semialdehyde + phosphate + NADP(+) = N-acetyl-L-glutamyl 5-phosphate + NADPH + H(+). It participates in amino-acid biosynthesis; L-arginine biosynthesis; N(2)-acetyl-L-ornithine from L-glutamate: step 3/4. Its function is as follows. Catalyzes the NADPH-dependent reduction of N-acetyl-5-glutamyl phosphate to yield N-acetyl-L-glutamate 5-semialdehyde. The protein is N-acetyl-gamma-glutamyl-phosphate reductase of Acinetobacter baumannii (strain SDF).